Here is a 276-residue protein sequence, read N- to C-terminus: Orotidine 5'-phosphate decarboxylase (276 aa).

The Proton donor role is filled by lysine 96.

Belongs to the OMP decarboxylase family. Type 2 subfamily.

It catalyses the reaction orotidine 5'-phosphate + H(+) = UMP + CO2. It functions in the pathway pyrimidine metabolism; UMP biosynthesis via de novo pathway; UMP from orotate: step 2/2. The chain is Orotidine 5'-phosphate decarboxylase from Porphyromonas gingivalis (strain ATCC BAA-308 / W83).